The sequence spans 1118 residues: Carbamoyl phosphate synthase arginine-specific large chain (1118 aa).

The tract at residues Gln23–Asp420 is carboxyphosphate synthetic domain. Arg150, Arg190, Gly196, Gly197, Lys227, Leu229, Glu234, Gly260, Val261, His262, Gln303, and Glu317 together coordinate ATP. One can recognise an ATP-grasp 1 domain in the interval Ala154–Leu346. 3 residues coordinate Mg(2+): Gln303, Glu317, and Asn319. Positions 303, 317, and 319 each coordinate Mn(2+). The oligomerization domain stretch occupies residues Pro421–Asp573. Positions Val574 to Met958 are carbamoyl phosphate synthetic domain. Positions Ser698 to Leu890 constitute an ATP-grasp 2 domain. Residues Arg734, Lys773, Ile775, Glu780, Gly805, Val806, His807, Ser808, Gln848, and Glu861 each coordinate ATP. Mg(2+) is bound by residues Gln848, Glu861, and Asn863. 3 residues coordinate Mn(2+): Gln848, Glu861, and Asn863. The segment at Asn959 to Val1102 is allosteric domain. The MGS-like domain maps to Phe960 to Tyr1118.

This sequence belongs to the CarB family. Heterodimer composed of 2 chains; the small (or glutamine) chain promotes the hydrolysis of glutamine to ammonia, which is used by the large (or ammonia) chain to synthesize carbamoyl phosphate. Mg(2+) serves as cofactor. Mn(2+) is required as a cofactor.

The protein localises to the cytoplasm. The catalysed reaction is hydrogencarbonate + L-glutamine + 2 ATP + H2O = carbamoyl phosphate + L-glutamate + 2 ADP + phosphate + 2 H(+). It carries out the reaction hydrogencarbonate + NH4(+) + 2 ATP = carbamoyl phosphate + 2 ADP + phosphate + 2 H(+). It participates in amino-acid biosynthesis; L-arginine biosynthesis; carbamoyl phosphate from bicarbonate: step 1/1. Large subunit of the arginine-specific carbamoyl phosphate synthase (CPSase). CPSase catalyzes the formation of carbamoyl phosphate from the ammonia moiety of glutamine, hydrogencarbonate, and phosphate donated by ATP, constituting the first step of 2 biosynthetic pathways, one leading to arginine and/or urea and the other to pyrimidine nucleotides. The large subunit (synthetase) binds the substrates ammonia (free or transferred from glutamine from the small subunit), hydrogencarbonate and ATP and carries out an ATP-coupled ligase reaction, activating hydrogencarbonate by forming carboxy phosphate which reacts with ammonia to form carbamoyl phosphate. The protein is Carbamoyl phosphate synthase arginine-specific large chain (CPA2) of Saccharomyces cerevisiae (strain ATCC 204508 / S288c) (Baker's yeast).